A 910-amino-acid chain; its full sequence is MASSAQSSGSSGGPAVPTVQRGIVKMVLSGCAIIVRGQPRGGPPPERQINLSNIRAGNLARRAAATQPDGKDTPDEPWAFPAREFLRKKLIGKEVCFTIENKTPQGREYGMIYLGKDTNGENIAESLVAEGLATRREGMRANNPEQNRLSECEEQAKASKKGMWSEGNGSHTIRDLKYTIENPRHFVDSHHQKPVNAIIEHVRDGSVVRALLLPGHHLVTVMLSGIKCPTFRRETDGSETPEPFAAEAKFFTESRLLQRDVQIILESCHNQNLLGTILHPNGNITELLLKEGFARCVDWSIAVYTRGAEKLRAAERFAKERRLRIWRDYVPPTANLDQKDKQFVAKVMQVLNADAIVVKLNSGDYKTIHLSSIRPPRLEGDNIQDKNKKLRPLYDIPYMFEAREFLRKKLIGKKVNVTVDYIRPASPATETVPAFSERTCATVTIGGINIAEALVSKGLATVIRYRQDDDQRSSHYDELLAAEARAIKNGKGLHSKKEVPIHRVADISGDTQKAKQFLPFLQRAGRSEAVVEYVFSGSRLKLYLPKETCLITFLLAGIECPRGARNLPGLVQEGEPFSEEATLFTKELVLQREVEVEVESMDKAGNFIGWLHMDGANLSVLLVEQALSKVHFTAERSAYYKPLLSAEEAAKQRKEKVWAHYEERPVEEVMPVLEEKERSASYKPVFVTEITDDLHFYVQDVETGTQLEKLMENMRNDISSHPPVEGSYAPRRGEFCIAKFVDGEWYRARVEKVESPAKVHVFYIDYGNREILPSTRLGTLPPAFSTRVLPAQATEYAFAFIQVPQDEDARTDAVDSVVRDIQNTQCLLNVEHLSASCPHVTLQFADSKGDVGLGLVKEGLVMVEVRKEKQFQKVITEYLNAQESAKSARLNLWRYGDFRADDADEFGYSR.

Ala-2 is subject to N-acetylalanine. TNase-like domains follow at residues 18-166, 193-328, and 341-496; these read TVQR…MWSE, KPVN…IWRD, and KQFV…LHSK. A Phosphothreonine modification is found at Thr-103. Position 193 is an N6-acetyllysine (Lys-193). 2 positions are modified to phosphothreonine: Thr-235 and Thr-240. Short sequence motifs (nuclear localization signal) lie at residues 321 to 325 and 388 to 392; these read RRLRI and KKLRP. A Phosphoserine modification is found at Ser-426. A Glycyl lysine isopeptide (Lys-Gly) (interchain with G-Cter in SUMO2) cross-link involves residue Lys-513. Positions 525–660 constitute a TNase-like 4 domain; sequence GRSEAVVEYV…KQRKEKVWAH (136 aa). Lys-641 bears the N6-acetyllysine mark. Phosphoserine is present on Ser-645. Positions 729 to 787 constitute a Tudor domain; that stretch reads APRRGEFCIAKFVDGEWYRARVEKVESPAKVHVFYIDYGNREILPSTRLGTLPPAFSTR. Thr-779 is modified (phosphothreonine). A phosphoserine mark is found at Ser-785 and Ser-909.

As to quaternary structure, forms a ternary complex with STAT6 and POLR2A. Associates with the RNA-induced silencing complex (RISC). Interacts with the RISC components AGO2, FMR1 and TNRC6A. Interacts with GTF2E1 and GTF2E2. Interacts with PIM1. Interacts with STAT5. Interacts with SYT11 (via C2 2 domain); the interaction with SYT11 is direct. Phosphorylated by PIM1 in vitro.

The protein localises to the cytoplasm. Its subcellular location is the nucleus. The protein resides in the melanosome. It catalyses the reaction Endonucleolytic cleavage to nucleoside 3'-phosphates and 3'-phosphooligonucleotide end-products.. Functionally, endonuclease that mediates miRNA decay of both protein-free and AGO2-loaded miRNAs. As part of its function in miRNA decay, regulates mRNAs involved in G1-to-S phase transition. Functions as a bridging factor between STAT6 and the basal transcription factor. Plays a role in PIM1 regulation of MYB activity. Functions as a transcriptional coactivator for STAT5. This Mus musculus (Mouse) protein is Staphylococcal nuclease domain-containing protein 1 (Snd1).